The primary structure comprises 570 residues: Glycine--tRNA ligase (570 aa).

Substrate contacts are provided by arginine 99 and glutamate 165. ATP-binding positions include 197–199 (RNE), 207–212 (LRLREF), 324–325 (EC), and 443–446 (GIDR). 212 to 216 (FSQAE) provides a ligand contact to substrate. 439–443 (EPSFG) provides a ligand contact to substrate.

Belongs to the class-II aminoacyl-tRNA synthetase family.

It is found in the cytoplasm. It carries out the reaction tRNA(Gly) + glycine + ATP = glycyl-tRNA(Gly) + AMP + diphosphate. Its function is as follows. Catalyzes the attachment of glycine to tRNA(Gly). In Thermococcus sibiricus (strain DSM 12597 / MM 739), this protein is Glycine--tRNA ligase.